The chain runs to 249 residues: Phosphate import ATP-binding protein PstB 3 (249 aa).

The ABC transporter domain maps to 4–244 (LVINNLDLYY…PQDERTENYI (241 aa)). 36–43 (GPSGCGKS) provides a ligand contact to ATP.

Belongs to the ABC transporter superfamily. Phosphate importer (TC 3.A.1.7) family. As to quaternary structure, the complex is composed of two ATP-binding proteins (PstB), two transmembrane proteins (PstC and PstA) and a solute-binding protein (PstS).

It is found in the cell membrane. It catalyses the reaction phosphate(out) + ATP + H2O = ADP + 2 phosphate(in) + H(+). Its function is as follows. Part of the ABC transporter complex PstSACB involved in phosphate import. Responsible for energy coupling to the transport system. The chain is Phosphate import ATP-binding protein PstB 3 from Streptococcus agalactiae serotype Ia (strain ATCC 27591 / A909 / CDC SS700).